The primary structure comprises 176 residues: Nucleoside triphosphate/diphosphate phosphatase (176 aa).

Arg23 (proton donor) is an active-site residue. Residues Asn87, Asp103, Asp105, Asp107, Asp120, and Glu123 each coordinate Mg(2+).

The protein belongs to the Ntdp family. It depends on Mg(2+) as a cofactor.

It carries out the reaction a ribonucleoside 5'-triphosphate + H2O = a ribonucleoside 5'-diphosphate + phosphate + H(+). It catalyses the reaction a ribonucleoside 5'-diphosphate + H2O = a ribonucleoside 5'-phosphate + phosphate + H(+). Has nucleoside phosphatase activity towards nucleoside triphosphates and nucleoside diphosphates. This Bacillus cytotoxicus (strain DSM 22905 / CIP 110041 / 391-98 / NVH 391-98) protein is Nucleoside triphosphate/diphosphate phosphatase.